The chain runs to 272 residues: Dermonecrotic toxin StSicTox-betaIC1 (272 aa).

H5 is a catalytic residue. Mg(2+) contacts are provided by E25 and D27. H41 acts as the Nucleophile in catalysis. 2 cysteine pairs are disulfide-bonded: C45-C51 and C47-C191. D85 contributes to the Mg(2+) binding site.

The protein belongs to the arthropod phospholipase D family. Class II subfamily. Class IIb sub-subfamily. Mg(2+) serves as cofactor. In terms of tissue distribution, expressed by the venom gland.

Its subcellular location is the secreted. It catalyses the reaction an N-(acyl)-sphingosylphosphocholine = an N-(acyl)-sphingosyl-1,3-cyclic phosphate + choline. The enzyme catalyses N-hexanoyl-sphing-4-enine-1-phosphocholine = N-(hexanoyl)-sphing-4-enine-1,3-cyclic phosphate + choline. The catalysed reaction is an N-(acyl)-sphingosylphosphoethanolamine = an N-(acyl)-sphingosyl-1,3-cyclic phosphate + ethanolamine. It carries out the reaction N-dodecanoyl-heptadecasphing-4-enine-1-phosphoethanolamine = N-dodecanoyl-heptadecasphing-4-enine-1,3-cyclic phosphate + ethanolamine. It catalyses the reaction a 1-acyl-sn-glycero-3-phosphoethanolamine = a 1-acyl-sn-glycero-2,3-cyclic phosphate + ethanolamine. The enzyme catalyses 1-tetradecanoyl-sn-glycero-3-phosphoethanolamine = 1-tetradecanoyl-sn-glycero-2,3-cyclic phosphate + ethanolamine. In terms of biological role, dermonecrotic toxins cleave the phosphodiester linkage between the phosphate and headgroup of certain phospholipids (sphingolipid and lysolipid substrates), forming an alcohol (often choline) and a cyclic phosphate. This toxin acts on lysophosphatidylethanolamine (LPE) and ceramide phosphoethanolamine (CPE) with high activity. This toxin acts on sphingomyelin (SM) with very low activity and is not active on lysophosphatidylserine (LPS), lysophosphatidylcholine (LPC) and lysophosphatidylglycerol (LPG). It acts by transphosphatidylation, releasing exclusively cyclic phosphate as second products. It is not surprising that spider toxins have affinity for ethanolamine-containing sphingolipids since they are common in insect prey. Induces dermonecrosis, hemolysis, increased vascular permeability, edema, inflammatory response, and platelet aggregation. The protein is Dermonecrotic toxin StSicTox-betaIC1 of Sicarius terrosus (Cave spider).